The following is a 1296-amino-acid chain: ABC transporter B family member 21 (1296 aa).

Residues 1-59 (MDSVIESEEGLKVDSPNRADAETSNSKIHEEDEKELKTESDLKEEKKKTEKNKQEEDEK) form a disordered region. The span at 9 to 59 (EGLKVDSPNRADAETSNSKIHEEDEKELKTESDLKEEKKKTEKNKQEEDEK) shows a compositional bias: basic and acidic residues. The helical transmembrane segment at 77-97 (IILMILGTIGAVGNGLGFPIM) threads the bilayer. The 289-residue stretch at 80-368 (MILGTIGAVG…ASPCLSAFAA (289 aa)) folds into the ABC transmembrane type-1 1 domain. N113 is a glycosylation site (N-linked (GlcNAc...) asparagine). A run of 5 helical transmembrane segments spans residues 128–148 (FVYL…GWMI), 205–225 (IQLV…GWLL), 227–247 (LVMV…AIVI), 307–327 (GLGL…AVWY), and 336–356 (GYTG…SMSL). An ABC transporter 1 domain is found at 403-639 (IELNNVNFSY…PEGAYSQLIR (237 aa)). A glycan (N-linked (GlcNAc...) asparagine) is linked at N409. Residue 438–445 (GQSGSGKS) participates in ATP binding. N-linked (GlcNAc...) asparagine glycans are attached at residues N505, N519, and N590. Positions 640 to 662 (LQEDTKQTEDSTDEQKLSMESMK) are enriched in basic and acidic residues. Positions 640–672 (LQEDTKQTEDSTDEQKLSMESMKRSSLRKSSLS) are disordered. S657 and S660 each carry phosphoserine. An ABC transmembrane type-1 2 domain is found at 730 to 1017 (LILGSIAAVL…SSSLSPDSSK (288 aa)). 2 helical membrane passes run 731-751 (ILGS…GILI) and 774-794 (IIFM…TIFF). Residue N826 is glycosylated (N-linked (GlcNAc...) asparagine). 3 helical membrane-spanning segments follow: residues 865–885 (VIAF…LPLI), 952–972 (GIVS…SYAA), and 986–1006 (TTFD…VAIS). Residues 1052–1289 (IELRHISFKY…KDGVYASLVQ (238 aa)) enclose the ABC transporter 2 domain. ATP is bound at residue 1087 to 1094 (GESGSGKS). N-linked (GlcNAc...) asparagine glycosylation is found at N1141 and N1240.

The protein belongs to the ABC transporter superfamily. ABCB family. Multidrug resistance exporter (TC 3.A.1.201) subfamily.

The protein resides in the membrane. The protein is ABC transporter B family member 21 (ABCB21) of Arabidopsis thaliana (Mouse-ear cress).